The sequence spans 406 residues: Tryptophan synthase beta chain (406 aa).

Lys99 bears the N6-(pyridoxal phosphate)lysine mark.

The protein belongs to the TrpB family. Tetramer of two alpha and two beta chains. Requires pyridoxal 5'-phosphate as cofactor.

The catalysed reaction is (1S,2R)-1-C-(indol-3-yl)glycerol 3-phosphate + L-serine = D-glyceraldehyde 3-phosphate + L-tryptophan + H2O. It participates in amino-acid biosynthesis; L-tryptophan biosynthesis; L-tryptophan from chorismate: step 5/5. Functionally, the beta subunit is responsible for the synthesis of L-tryptophan from indole and L-serine. This is Tryptophan synthase beta chain from Methylobacterium sp. (strain 4-46).